Consider the following 283-residue polypeptide: Plasma membrane ascorbate-dependent reductase CYBRD1 (283 aa).

At 1 to 5 (MEGYK) the chain is on the cytoplasmic side. The chain crosses the membrane as a helical span at residues 6–30 (SFLVFLVSSLLLGFLGVIFTLVWVL). One can recognise a Cytochrome b561 domain in the interval 13-218 (SSLLLGFLGV…FGGLVVWMVT (206 aa)). At 31–45 (HWREGLGWDGGAAEF) the chain is on the extracellular side. A helical membrane pass occupies residues 46–67 (NWHPVLVTSGFIFIQGIAIIVY). Positions 48, 68, and 77 each coordinate heme b. The Cytoplasmic segment spans residues 68-76 (RLPWTWNCS). Lys77 and Lys81 together coordinate L-ascorbate. Residues 77–103 (KLLMKFIHAGLHLTAFVFTIVALVAVF) traverse the membrane as a helical segment. Heme b is bound at residue His84. The Extracellular segment spans residues 104–116 (DFHNAKNIPNMYS). His106 is a Fe(3+) binding site. Heme b-binding positions include 113–116 (NMYS) and His118. A helical transmembrane segment spans residues 117–142 (LHSWIGLTVVILYALQLVLGVSIYLL). Topologically, residues 143–149 (PFARDTL) are cytoplasmic. Arg150 is a binding site for L-ascorbate. A helical membrane pass occupies residues 150-177 (RAALMPVHVYSGLLIFGTVIATALMGIT). 2 residues coordinate heme b: His157 and Glu178. The Extracellular portion of the chain corresponds to 178-195 (EKLIFSLKEPPYSKMPPE). A helical membrane pass occupies residues 196 to 220 (AIFVNTFGLIILVFGGLVVWMVTTP). At 221 to 283 (AWKRPREQEI…LDDAGQRSTM (63 aa)) the chain is on the cytoplasmic side. Lys223 contributes to the heme b binding site. Residues 234–263 (NPTVSSPDGTEEGSTITDCSNTEKSDVELN) are disordered. Polar residues predominate over residues 235–253 (PTVSSPDGTEEGSTITDCS). A compositionally biased stretch (basic and acidic residues) spans 254–263 (NTEKSDVELN).

As to quaternary structure, homodimer. Heme b serves as cofactor.

It localises to the cell membrane. Its subcellular location is the apical cell membrane. It carries out the reaction Fe(3+)(out) + L-ascorbate(in) = monodehydro-L-ascorbate radical(in) + Fe(2+)(out) + H(+). It catalyses the reaction Cu(2+)(out) + L-ascorbate(in) = Cu(+)(out) + monodehydro-L-ascorbate radical(in) + H(+). The enzyme catalyses monodehydro-L-ascorbate radical(out) + L-ascorbate(in) = monodehydro-L-ascorbate radical(in) + L-ascorbate(out). In terms of biological role, plasma membrane reductase that uses cytoplasmic ascorbate as an electron donor to reduce extracellular Fe(3+) into Fe(2+). It is also able to reduce extracellular monodehydro-L-ascorbate and may be involved in extracellular ascorbate regeneration. May also function as a cupric transmembrane reductase. The sequence is that of Plasma membrane ascorbate-dependent reductase CYBRD1 (cybrd1) from Xenopus tropicalis (Western clawed frog).